A 304-amino-acid polypeptide reads, in one-letter code: 17-beta-hydroxysteroid dehydrogenase 13 (304 aa).

Positions 1–19 are cleaved as a signal peptide; it reads MNLILEFLLLVGVIIYSYL. At S33 the chain carries Phosphoserine. 40-67 provides a ligand contact to NAD(+); that stretch reads LITGAGHGIGRLTAYEFAKQKSRLVLWD. K79 bears the N6-acetyllysine mark. S172 lines the substrate pocket. The active-site Proton acceptor is the Y185. Position 189 (K189) interacts with NAD(+). Residues 276 to 304 are disordered; the sequence is SSKHPHGGSQQPVTPIPGDLTPSSDFLKH.

It belongs to the short-chain dehydrogenases/reductases (SDR) family. Expressed predominantly in the liver (at protein level).

Its subcellular location is the lipid droplet. The protein localises to the endoplasmic reticulum. It carries out the reaction 17beta-estradiol + NAD(+) = estrone + NADH + H(+). The enzyme catalyses all-trans-retinol + NAD(+) = all-trans-retinal + NADH + H(+). It catalyses the reaction all-trans-retinal + NAD(+) + H2O = all-trans-retinoate + NADH + 2 H(+). Its function is as follows. Plays a pivotal role in hepatic lipid metabolism. In vitro, it catalyzes the oxidation of a variety of lipid substrates, including 17beta-estradiol, retinol, retinal, and leukotriene B4. The chain is 17-beta-hydroxysteroid dehydrogenase 13 (Hsd17b13) from Mus musculus (Mouse).